Here is a 70-residue protein sequence, read N- to C-terminus: Protein SlyX homolog (70 aa).

This sequence belongs to the SlyX family.

The protein is Protein SlyX homolog of Nitrobacter winogradskyi (strain ATCC 25391 / DSM 10237 / CIP 104748 / NCIMB 11846 / Nb-255).